A 331-amino-acid polypeptide reads, in one-letter code: Probable allantoicase (331 aa).

The protein belongs to the allantoicase family.

It carries out the reaction allantoate + H2O = (S)-ureidoglycolate + urea. The protein operates within nitrogen metabolism; (S)-allantoin degradation; (S)-ureidoglycolate from allantoate (aminidohydrolase route): step 1/1. This chain is Probable allantoicase, found in Pseudomonas syringae pv. syringae (strain B728a).